The primary structure comprises 208 residues: Small ribosomal subunit protein uS4A (208 aa).

One can recognise an S4 RNA-binding domain in the interval 98–164; the sequence is TRLDNVVYTL…AKIQSAIQAV (67 aa).

This sequence belongs to the universal ribosomal protein uS4 family. Part of the 30S ribosomal subunit. Contacts protein S5. The interaction surface between S4 and S5 is involved in control of translational fidelity.

One of the primary rRNA binding proteins, it binds directly to 16S rRNA where it nucleates assembly of the body of the 30S subunit. Functionally, with S5 and S12 plays an important role in translational accuracy. The polypeptide is Small ribosomal subunit protein uS4A (Bdellovibrio bacteriovorus (strain ATCC 15356 / DSM 50701 / NCIMB 9529 / HD100)).